Reading from the N-terminus, the 344-residue chain is Nuclear distribution protein nudE-like 1-B (344 aa).

Residues 13–190 are a coiled coil; the sequence is KEEIVYWREL…LAVRERQTDG (178 aa). 2 disordered regions span residues 186–209 and 325–344; these read RQTDGIRKSAPSSPTLDCEKTDSS and PPGVLGSRPPSPPGLLPLSV. Positions 333 to 344 are enriched in pro residues; it reads PPSPPGLLPLSV.

The protein belongs to the nudE family. Phosphorylated in mitosis.

The protein localises to the cytoplasm. It is found in the cytoskeleton. Its subcellular location is the microtubule organizing center. It localises to the centrosome. The protein resides in the spindle. Its function is as follows. Required for organization of the cellular microtubule array and microtubule anchoring at the centrosome. Positively regulates the activity of the minus-end directed microtubule motor protein dynein. May enhance dynein-mediated microtubule sliding by targeting dynein to the microtubule plus end. Positively regulates lysosome peripheral distribution and ruffled border formation in osteoclasts. The sequence is that of Nuclear distribution protein nudE-like 1-B (ndel1-b) from Xenopus laevis (African clawed frog).